Reading from the N-terminus, the 181-residue chain is Cytochrome c oxidase subunit 2 (181 aa).

Cysteine 126, glutamate 128, cysteine 130, histidine 134, and methionine 137 together coordinate Cu cation. Glutamate 128 contributes to the Mg(2+) binding site.

Belongs to the cytochrome c oxidase subunit 2 family. In terms of assembly, component of the cytochrome c oxidase (complex IV, CIV), a multisubunit enzyme composed of a catalytic core of 3 subunits and several supernumerary subunits. The complex exists as a monomer or a dimer and forms supercomplexes (SCs) in the inner mitochondrial membrane with ubiquinol-cytochrome c oxidoreductase (cytochrome b-c1 complex, complex III, CIII). Cu cation serves as cofactor.

The protein resides in the mitochondrion inner membrane. The enzyme catalyses 4 Fe(II)-[cytochrome c] + O2 + 8 H(+)(in) = 4 Fe(III)-[cytochrome c] + 2 H2O + 4 H(+)(out). Functionally, component of the cytochrome c oxidase, the last enzyme in the mitochondrial electron transport chain which drives oxidative phosphorylation. The respiratory chain contains 3 multisubunit complexes succinate dehydrogenase (complex II, CII), ubiquinol-cytochrome c oxidoreductase (cytochrome b-c1 complex, complex III, CIII) and cytochrome c oxidase (complex IV, CIV), that cooperate to transfer electrons derived from NADH and succinate to molecular oxygen, creating an electrochemical gradient over the inner membrane that drives transmembrane transport and the ATP synthase. Cytochrome c oxidase is the component of the respiratory chain that catalyzes the reduction of oxygen to water. Electrons originating from reduced cytochrome c in the intermembrane space (IMS) are transferred via the dinuclear copper A center (CU(A)) of subunit 2 and heme A of subunit 1 to the active site in subunit 1, a binuclear center (BNC) formed by heme A3 and copper B (CU(B)). The BNC reduces molecular oxygen to 2 water molecules using 4 electrons from cytochrome c in the IMS and 4 protons from the mitochondrial matrix. The protein is Cytochrome c oxidase subunit 2 (COII) of Paramecium primaurelia.